We begin with the raw amino-acid sequence, 911 residues long: MMLRSAGGSIRRAITQRQNQHRFYRPGHGVFGHLPDPPKRVFENQGGLTPENAQRVHLINAFRRYGYLEADLDPLGLRKVESVAELDPAIYGLSLDENVKGNFSLHDLAEQLRHIYCGPTAIEFMHINNWEERQWISQNFENCIAEELRKEELLRIGDLMLKCENFDKFLSTKFPTLKRYGAEGAESMFAFFSELFEGAAEKQVEEIIIGIAHRGRLNLLTQLMDFPPVHMFRKIKGRAEFPESADAAGDVLSHLVSSFDYKGSEGNVHVTMLPNPSHLEAVNPVAMGKARARAWSMNKGDYSPDERSARAGDSVLNVLVHGDGAFTGQGVVWESIALSQAPHFRLGGTVHLVTNNQIAFTAESSVGRSSTHCTDIAKAFEYPVIHVNGDHPEEVVKATRLALAYRERFRKDVFINLVCFRRWGHNELDDPTFTSPVMYKEVEARESVPRLFLDRLVEEGFTTEEAVKEQLQKHTEQLNNELKKVDSTVPIDISHRGRWEGFKQAPKAIESWDTGVATDLLRFIGAGSVKVPEDFDTHKHLYKMHIDSRMQKMQTGEGIDWATAEAMAFGSILLEGNDVRISGQDVGRGTFCHRHAMMVDQSTDHIHIPLNELVEEQKNQLEVANNLLSEEAILGFEWGFSSENPRRLCIWEAQFGDFFNGAQIIIDTFLASAESKWLTSSGLTMLLPHGFDGAGPEHSSCRMERFLQLCDSREDQTPVDGENVNMRVANPTTSAQYFHLLRRQVVPNYRKPLIVVGPKILLRHPKAASTINEFGPGTTYQNVISEEHATSSQKIKKVIFVSGKHWINVEKARDERGLKDSVAIVRVEMLCPFPVVDLQAVLKKYPGAQDFVWSQEEPRNAGAWSFVRPRFENALGVRLKFAGRPELAWTATAIGEHHTKEAEEVINQTFA.

Belongs to the alpha-ketoglutarate dehydrogenase family. It depends on thiamine diphosphate as a cofactor.

It localises to the mitochondrion. It catalyses the reaction N(6)-[(R)-lipoyl]-L-lysyl-[protein] + 2-oxoadipate + H(+) = N(6)-[(R)-S(8)-glutaryldihydrolipoyl]-L-lysyl-[protein] + CO2. Its function is as follows. 2-oxoadipate dehydrogenase (E1a) component of the 2-oxoadipate dehydrogenase complex (OADHC). Participates in the first step, rate limiting for the overall conversion of 2-oxoadipate (alpha-ketoadipate) to glutaryl-CoA and CO(2) catalyzed by the whole OADHC. Catalyzes the irreversible decarboxylation of 2-oxoadipate via the thiamine diphosphate (ThDP) cofactor and subsequent transfer of the decarboxylated acyl intermediate on an oxidized dihydrolipoyl group that is covalently amidated to the E2 enzyme (dihydrolipoyllysine-residue succinyltransferase or DLST). The polypeptide is Probable 2-oxoadipate dehydrogenase complex component E1 homolog (Caenorhabditis elegans).